Here is a 599-residue protein sequence, read N- to C-terminus: MTTQVPPSALLPLNPEQLARLQAATTDLTPTQLAWVSGYFWGVLNQQPAALAATPAPAAEMPGITIISASQTGNARRVAEALRDDLLAAKLNVKLVNAGDYKFKQIASEKLLIVVTSTQGEGEPPEEAVALHKFLFSKKAPKLENTAFAVFSLGDSSYEFFCQSGKDFDSKLAELGGERLLDRVDADVEYQAAASEWRARVVDALKSRAPVAAPSQSVATGAVNEIHTSPYSKDAPLAASLSVNQKITGRNSEKDVRHIEIDLGDSGLRYQPGDALGVWYQNDPALVKELVELLWLKGDEPVTVEGKTLPLNEALQWHFELTVNTANIVENYATLTRSETLLPLVGDKAKLQHYAATTPIVDMVRFSPAQLDAEALINLLRPLTPRLYSIASSQAEVENEVHVTVGVVRYDVEGRARAGGASSFLADRVEEEGEVRVFIEHNDNFRLPTNPETPVIMIGPGTGIAPFRAFMQQRAADEAPGKNWLFFGNPHFTEDFLYQVEWQRYVKEGVLTRIDLAWSRDQKEKIYVQDKLREQGAELWRWINDGAHIYVCGDANRMAKDVEQALLEVIAEFGGMDTEAADEFLSELRVERRYQRDVY.

Residues 64–202 form the Flavodoxin-like domain; that stretch reads ITIISASQTG…AASEWRARVV (139 aa). FMN contacts are provided by residues 70–75, 117–120, and 153–162; these read SQTGNA, STQG, and LGDSSYEFFC. The region spanning 234-448 is the FAD-binding FR-type domain; sequence DAPLAASLSV…IEHNDNFRLP (215 aa). Residues T322, A356, 386-389, 404-406, Y410, and 419-422 contribute to the FAD site; these read RLYS, TVG, and GGAS. Residues 519 to 520, 525 to 529, and D561 each bind NADP(+); these read SR and KIYVQ. Position 599 (Y599) interacts with FAD.

It belongs to the NADPH-dependent sulphite reductase flavoprotein subunit CysJ family. In the N-terminal section; belongs to the flavodoxin family. This sequence in the C-terminal section; belongs to the flavoprotein pyridine nucleotide cytochrome reductase family. In terms of assembly, alpha(8)-beta(8). The alpha component is a flavoprotein, the beta component is a hemoprotein. The cofactor is FAD. Requires FMN as cofactor.

The enzyme catalyses hydrogen sulfide + 3 NADP(+) + 3 H2O = sulfite + 3 NADPH + 4 H(+). The protein operates within sulfur metabolism; hydrogen sulfide biosynthesis; hydrogen sulfide from sulfite (NADPH route): step 1/1. In terms of biological role, component of the sulfite reductase complex that catalyzes the 6-electron reduction of sulfite to sulfide. This is one of several activities required for the biosynthesis of L-cysteine from sulfate. The flavoprotein component catalyzes the electron flow from NADPH -&gt; FAD -&gt; FMN to the hemoprotein component. The polypeptide is Sulfite reductase [NADPH] flavoprotein alpha-component (Escherichia coli O6:H1 (strain CFT073 / ATCC 700928 / UPEC)).